The chain runs to 691 residues: DNA ligase (691 aa).

The interval 1–22 (MTTAEDVAGNPYISDPRTDFES) is disordered. NAD(+)-binding positions include 59 to 63 (DRAYD), 107 to 108 (SI), and E137. The active-site N6-AMP-lysine intermediate is K139. Residues R160, E196, K311, and K335 each contribute to the NAD(+) site. Zn(2+) contacts are provided by C426, C429, C442, and C448. Residues 608–691 (TDGDALDGQT…EELLDDAGVL (84 aa)) form the BRCT domain. Residues 637 to 667 (ERNDGSATSSVSGNTDYLVLGDNPGQRKQDD) form a disordered region. The segment covering 641–651 (GSATSSVSGNT) has biased composition (polar residues).

It belongs to the NAD-dependent DNA ligase family. LigA subfamily. Mg(2+) serves as cofactor. The cofactor is Mn(2+).

The catalysed reaction is NAD(+) + (deoxyribonucleotide)n-3'-hydroxyl + 5'-phospho-(deoxyribonucleotide)m = (deoxyribonucleotide)n+m + AMP + beta-nicotinamide D-nucleotide.. DNA ligase that catalyzes the formation of phosphodiester linkages between 5'-phosphoryl and 3'-hydroxyl groups in double-stranded DNA using NAD as a coenzyme and as the energy source for the reaction. It is essential for DNA replication and repair of damaged DNA. The polypeptide is DNA ligase (Haloarcula marismortui (strain ATCC 43049 / DSM 3752 / JCM 8966 / VKM B-1809) (Halobacterium marismortui)).